The sequence spans 412 residues: Glutamyl-tRNA reductase (412 aa).

Residues 52-55 (TCNR), Ser108, 113-115 (EYE), and Gln119 each bind substrate. Catalysis depends on Cys53, which acts as the Nucleophile. Position 189–194 (189–194 (GAGEIG)) interacts with NADP(+).

Belongs to the glutamyl-tRNA reductase family. As to quaternary structure, homodimer.

The catalysed reaction is (S)-4-amino-5-oxopentanoate + tRNA(Glu) + NADP(+) = L-glutamyl-tRNA(Glu) + NADPH + H(+). It participates in porphyrin-containing compound metabolism; protoporphyrin-IX biosynthesis; 5-aminolevulinate from L-glutamyl-tRNA(Glu): step 1/2. Functionally, catalyzes the NADPH-dependent reduction of glutamyl-tRNA(Glu) to glutamate 1-semialdehyde (GSA). The polypeptide is Glutamyl-tRNA reductase (Sulfurisphaera tokodaii (strain DSM 16993 / JCM 10545 / NBRC 100140 / 7) (Sulfolobus tokodaii)).